We begin with the raw amino-acid sequence, 322 residues long: CRISPR-associated protein Cas1 1 (322 aa).

Mn(2+) contacts are provided by Glu149, His214, and Glu229.

This sequence belongs to the CRISPR-associated endonuclease Cas1 family. In terms of assembly, homodimer, forms a heterotetramer with a Cas2 homodimer. Mg(2+) serves as cofactor. Mn(2+) is required as a cofactor.

Its function is as follows. CRISPR (clustered regularly interspaced short palindromic repeat), is an adaptive immune system that provides protection against mobile genetic elements (viruses, transposable elements and conjugative plasmids). CRISPR clusters contain spacers, sequences complementary to antecedent mobile elements, and target invading nucleic acids. CRISPR clusters are transcribed and processed into CRISPR RNA (crRNA). Acts as a dsDNA endonuclease. Involved in the integration of spacer DNA into the CRISPR cassette. This is CRISPR-associated protein Cas1 1 from Methanobrevibacter ruminantium (strain ATCC 35063 / DSM 1093 / JCM 13430 / OCM 146 / M1) (Methanobacterium ruminantium).